Consider the following 199-residue polypeptide: V-type ATP synthase subunit E (199 aa).

This sequence belongs to the V-ATPase E subunit family.

Produces ATP from ADP in the presence of a proton gradient across the membrane. This is V-type ATP synthase subunit E (atpE) from Borreliella burgdorferi (strain ATCC 35210 / DSM 4680 / CIP 102532 / B31) (Borrelia burgdorferi).